The chain runs to 453 residues: T-box transcription factor T homolog (453 aa).

Residues 47–217 constitute a DNA-binding region (T-box); sequence LWRRFSKLTN…YNPFAKAFLD (171 aa). A disordered region spans residues 283 to 304; the sequence is RSHRSTPYPPPPYEQKYSPTSA.

The protein resides in the nucleus. Its function is as follows. May be involved in the transcriptional regulation of genes required for gastrulation. This chain is T-box transcription factor T homolog, found in Patiria pectinifera (Starfish).